We begin with the raw amino-acid sequence, 187 residues long: Peptidyl-tRNA hydrolase (187 aa).

Tyr18 contacts tRNA. His23 functions as the Proton acceptor in the catalytic mechanism. Residues Phe65, Asn67, and Asn113 each coordinate tRNA.

This sequence belongs to the PTH family. Monomer.

It is found in the cytoplasm. The catalysed reaction is an N-acyl-L-alpha-aminoacyl-tRNA + H2O = an N-acyl-L-amino acid + a tRNA + H(+). Functionally, hydrolyzes ribosome-free peptidyl-tRNAs (with 1 or more amino acids incorporated), which drop off the ribosome during protein synthesis, or as a result of ribosome stalling. Its function is as follows. Catalyzes the release of premature peptidyl moieties from peptidyl-tRNA molecules trapped in stalled 50S ribosomal subunits, and thus maintains levels of free tRNAs and 50S ribosomes. In Coxiella burnetii (strain CbuK_Q154) (Coxiella burnetii (strain Q154)), this protein is Peptidyl-tRNA hydrolase.